The primary structure comprises 659 residues: RNA polymerase II subunit A C-terminal domain phosphatase (659 aa).

Residues 139–303 (ITNRKLVLLV…KNSKEQMPVQ (165 aa)) form the FCP1 homology domain. In terms of domain architecture, BRCT spans 351–443 (ERHKVLDGCV…LKADENLFQL (93 aa)). The span at 484 to 504 (ALSDDEDDGDNEDEDDDGNDV) shows a compositional bias: acidic residues. The tract at residues 484–640 (ALSDDEDDGD…PESDDDDEFE (157 aa)) is disordered. Over residues 505 to 519 (GEDKGDENLEEKQEK) the composition is skewed to basic and acidic residues. A compositionally biased stretch (polar residues) spans 529 to 538 (QNGSVENQSG). 3 stretches are compositionally biased toward acidic residues: residues 560–576 (MEDE…DDDT), 596–607 (ENEDDAVFDVDD), and 616–640 (IDEE…DEFE).

Its subcellular location is the nucleus. It carries out the reaction O-phospho-L-seryl-[protein] + H2O = L-seryl-[protein] + phosphate. It catalyses the reaction O-phospho-L-threonyl-[protein] + H2O = L-threonyl-[protein] + phosphate. In terms of biological role, during the late stages of oogenesis, dephosphorylates 'Ser-5' of the heptad repeats YSPTSPS in the C-terminal domain of the largest RNA polymerase II subunit ama-1. Similarly, dephosphorylates 'Ser-5' of ama-1 in early embryonic cells prior to the activation of the zygotic transcription program at the 4-cell embryonic stage. May dephosphorylate 'Ser-2' of the ama-1 heptad repeats YSPTSPS in embryonic somatic and germline cells. In Caenorhabditis elegans, this protein is RNA polymerase II subunit A C-terminal domain phosphatase.